Reading from the N-terminus, the 206-residue chain is LexA repressor (206 aa).

The H-T-H motif DNA-binding region spans 28 to 48 (VREIGEAVGLASSSTVHGHLS). Active-site for autocatalytic cleavage activity residues include serine 129 and lysine 167.

It belongs to the peptidase S24 family. In terms of assembly, homodimer.

The enzyme catalyses Hydrolysis of Ala-|-Gly bond in repressor LexA.. Represses a number of genes involved in the response to DNA damage (SOS response), including recA and lexA. In the presence of single-stranded DNA, RecA interacts with LexA causing an autocatalytic cleavage which disrupts the DNA-binding part of LexA, leading to derepression of the SOS regulon and eventually DNA repair. This Staphylococcus epidermidis (strain ATCC 35984 / DSM 28319 / BCRC 17069 / CCUG 31568 / BM 3577 / RP62A) protein is LexA repressor.